The sequence spans 210 residues: Outer-membrane lipoprotein LolB (210 aa).

Positions 1 to 18 (MKKFTKILSLSTLLFLAG) are cleaved as a signal peptide. Cys19 carries the N-palmitoyl cysteine lipid modification. Cys19 carries the S-diacylglycerol cysteine lipid modification.

Belongs to the LolB family. As to quaternary structure, monomer.

It localises to the cell outer membrane. Its function is as follows. Plays a critical role in the incorporation of lipoproteins in the outer membrane after they are released by the LolA protein. This chain is Outer-membrane lipoprotein LolB, found in Actinobacillus pleuropneumoniae serotype 5b (strain L20).